A 696-amino-acid chain; its full sequence is Probable glutamine--fructose-6-phosphate aminotransferase [isomerizing] (696 aa).

C2 functions as the For GATase activity in the catalytic mechanism. Positions 2–303 (CGIFGYINYL…DDDIAHVRDG (302 aa)) constitute a Glutamine amidotransferase type-2 domain. SIS domains lie at 375–514 (YYDI…DSVS) and 547–686 (AIEQ…VDQP).

It catalyses the reaction D-fructose 6-phosphate + L-glutamine = D-glucosamine 6-phosphate + L-glutamate. It functions in the pathway nucleotide-sugar biosynthesis; UDP-N-acetyl-alpha-D-glucosamine biosynthesis; alpha-D-glucosamine 6-phosphate from D-fructose 6-phosphate: step 1/1. Functionally, involved in amino sugar synthesis (formation of chitin, supplies the amino sugars of asparagine-linked oligosaccharides of glycoproteins). In Schizosaccharomyces pombe (strain 972 / ATCC 24843) (Fission yeast), this protein is Probable glutamine--fructose-6-phosphate aminotransferase [isomerizing].